Here is a 397-residue protein sequence, read N- to C-terminus: UPF0597 protein Tmel_1007 (397 aa).

It belongs to the UPF0597 family.

The polypeptide is UPF0597 protein Tmel_1007 (Thermosipho melanesiensis (strain DSM 12029 / CIP 104789 / BI429)).